The following is a 376-amino-acid chain: Carbamoyl phosphate synthase small chain (376 aa).

The tract at residues 1 to 183 (MENILLNKAL…IYKKKYIEKN (183 aa)) is CPSase. L-glutamine-binding residues include Ser-51, Gly-235, and Gly-237. Positions 187–374 (NIVAYDFGIK…INLVKDYRLN (188 aa)) constitute a Glutamine amidotransferase type-1 domain. Cys-263 (nucleophile) is an active-site residue. The L-glutamine site is built by Leu-264, Gln-267, Asn-305, and Phe-308. Residues His-347 and Glu-349 contribute to the active site.

Belongs to the CarA family. In terms of assembly, composed of two chains; the small (or glutamine) chain promotes the hydrolysis of glutamine to ammonia, which is used by the large (or ammonia) chain to synthesize carbamoyl phosphate. Tetramer of heterodimers (alpha,beta)4.

The catalysed reaction is hydrogencarbonate + L-glutamine + 2 ATP + H2O = carbamoyl phosphate + L-glutamate + 2 ADP + phosphate + 2 H(+). It carries out the reaction L-glutamine + H2O = L-glutamate + NH4(+). It functions in the pathway amino-acid biosynthesis; L-arginine biosynthesis; carbamoyl phosphate from bicarbonate: step 1/1. The protein operates within pyrimidine metabolism; UMP biosynthesis via de novo pathway; (S)-dihydroorotate from bicarbonate: step 1/3. Functionally, small subunit of the glutamine-dependent carbamoyl phosphate synthetase (CPSase). CPSase catalyzes the formation of carbamoyl phosphate from the ammonia moiety of glutamine, carbonate, and phosphate donated by ATP, constituting the first step of 2 biosynthetic pathways, one leading to arginine and/or urea and the other to pyrimidine nucleotides. The small subunit (glutamine amidotransferase) binds and cleaves glutamine to supply the large subunit with the substrate ammonia. The polypeptide is Carbamoyl phosphate synthase small chain (Wigglesworthia glossinidia brevipalpis).